The sequence spans 853 residues: Neural cell adhesion molecule 1 (853 aa).

The N-terminal stretch at 1–19 (MLQTKNLIWTLFFLGTAVS) is a signal peptide. Ig-like C2-type domains are found at residues 20-111 (LQVD…ATVN), 116-205 (QKLM…KDIQ), 212-300 (PTVQ…ASIH), 307-412 (PKIT…LEVQ), and 415-500 (PKLQ…ESLE). The Extracellular portion of the chain corresponds to 20–719 (LQVDIVPSQG…NGSPTSGLST (700 aa)). Disulfide bonds link Cys41/Cys96 and Cys139/Cys189. Heparin is bound by residues 152-156 (KHKGR) and 161-165 (KKDVR). Asn222 carries an N-linked (GlcNAc...) asparagine glycan. Cys235 and Cys286 are disulfide-bonded. N-linked (GlcNAc...) asparagine glycans are attached at residues Asn314, Asn346, Asn432, Asn458, and Asn487. Cys328 and Cys394 are joined by a disulfide. Cys435 and Cys488 are oxidised to a cystine. Fibronectin type-III domains lie at 508–607 (TPSS…TQPV) and 609–704 (EPSA…SAQP). A helical transmembrane segment spans residues 720 to 737 (GAIVGILVVTFVLLLVAV). The Cytoplasmic portion of the chain corresponds to 738 to 853 (DVTCYFLNKC…TQIKVNESKA (116 aa)). The disordered stretch occupies residues 764 to 853 (GAKGKDMEEG…TQIKVNESKA (90 aa)). Composition is skewed to basic and acidic residues over residues 766–807 (KGKD…HTEP) and 815–829 (EPEK…ETET). Phosphoserine is present on residues Ser778 and Ser782. The segment covering 838–853 (TVPNDATQIKVNESKA) has biased composition (polar residues).

As to quaternary structure, interacts with MDK. Found in a complex with SLC39A6, SLC39A10 and with NCAM1; this complex controls NCAM1 phosphorylation and integration into focal adhesion complexes during epithelial-tomesenchymal transition. Interacts with synaptic plasticity regulator PANTS. In terms of processing, polysialylated by ST8SIA2 and ST8SIA4. Polysialylation modulates cell interactions by confering both attractive and repulsive properties that are highly regulated by ST8SIA2 and ST8SIA4. Polysialylation is formed on a-2,3-linked sialic acid of core glycans.

The protein resides in the cell membrane. Functionally, this protein is a cell adhesion molecule involved in neuron-neuron adhesion, neurite fasciculation, outgrowth of neurites, etc. In Bos taurus (Bovine), this protein is Neural cell adhesion molecule 1.